A 790-amino-acid polypeptide reads, in one-letter code: DNA topoisomerase 1 (790 aa).

3 stretches are compositionally biased toward polar residues: residues 1–18 (MKSNPGITVIKQNASNVM), 44–54 (KLSSGALNGNS), and 61–70 (SNLSCPSPYT). A disordered region spans residues 1 to 196 (MKSNPGITVI…KKRPDVSASV (196 aa)). Acidic residues predominate over residues 158–167 (QEEAAADDDP). Polar residues predominate over residues 168 to 181 (SISNRNKKSTTPAS). Interaction with DNA stretches follow at residues 426–427 (KY), 490–495 (RAGNEK), and 581–583 (TAK). Positions 433-790 (SSSLKGKVTR…AMDVVLIFRF (358 aa)) constitute a Topo IB-type catalytic domain. Tyrosine 749 serves as the catalytic O-(3'-phospho-DNA)-tyrosine intermediate.

It belongs to the type IB topoisomerase family.

The protein localises to the nucleus. The enzyme catalyses ATP-independent breakage of single-stranded DNA, followed by passage and rejoining.. In terms of biological role, releases the supercoiling and torsional tension of DNA introduced during the DNA replication and transcription by transiently cleaving and rejoining one strand of the DNA duplex. Introduces a single-strand break via transesterification at a target site in duplex DNA. The scissile phosphodiester is attacked by the catalytic tyrosine of the enzyme, resulting in the formation of a DNA-(3'-phosphotyrosyl)-enzyme intermediate and the expulsion of a 5'-OH DNA strand. The free DNA strand then rotates around the intact phosphodiester bond on the opposing strand, thus removing DNA supercoils. Finally, in the religation step, the DNA 5'-OH attacks the covalent intermediate to expel the active-site tyrosine and restore the DNA phosphodiester backbone. The protein is DNA topoisomerase 1 (TOP1) of Daucus carota (Wild carrot).